A 390-amino-acid polypeptide reads, in one-letter code: Cystathionine beta-lyase MetC (390 aa).

Position 200 is an N6-(pyridoxal phosphate)lysine (lysine 200).

The protein belongs to the trans-sulfuration enzymes family. In terms of assembly, homotetramer. Requires pyridoxal 5'-phosphate as cofactor.

The protein resides in the cytoplasm. The catalysed reaction is L,L-cystathionine + H2O = L-homocysteine + pyruvate + NH4(+). It catalyses the reaction an S-substituted L-cysteine + H2O = a thiol + pyruvate + NH4(+). The protein operates within amino-acid biosynthesis; L-methionine biosynthesis via de novo pathway; L-homocysteine from L-cystathionine: step 1/1. Catalyzes the transformation of cystathionine into homocysteine. Also exhibits cysteine desulfhydrase activity in vitro, producing sulfide from cysteine. The protein is Cystathionine beta-lyase MetC (metC) of Bacillus subtilis (strain 168).